Here is a 272-residue protein sequence, read N- to C-terminus: Phytolongin Phyl2.2 (272 aa).

Positions 12–116 (CIAKGTVVLA…LINPVSHCLQ (105 aa)) constitute a Longin domain. Residues 243-263 (WVVLMFDFCICAVLFGIWLWI) traverse the membrane as a helical; Anchor for type IV membrane protein segment.

The protein belongs to the synaptobrevin family.

Its subcellular location is the membrane. Its function is as follows. Non-SNARE longin protein involved in membrane-trafficking machinery. This Arabidopsis thaliana (Mouse-ear cress) protein is Phytolongin Phyl2.2.